We begin with the raw amino-acid sequence, 204 residues long: LexA repressor (204 aa).

The H-T-H motif DNA-binding region spans 28-48 (VREIGQAVGLASSSTVHGHLS). Residues serine 126 and lysine 164 each act as for autocatalytic cleavage activity in the active site.

This sequence belongs to the peptidase S24 family. As to quaternary structure, homodimer.

It catalyses the reaction Hydrolysis of Ala-|-Gly bond in repressor LexA.. Functionally, represses a number of genes involved in the response to DNA damage (SOS response), including recA and lexA. In the presence of single-stranded DNA, RecA interacts with LexA causing an autocatalytic cleavage which disrupts the DNA-binding part of LexA, leading to derepression of the SOS regulon and eventually DNA repair. The chain is LexA repressor from Bacillus mycoides (strain KBAB4) (Bacillus weihenstephanensis).